A 164-amino-acid polypeptide reads, in one-letter code: uncharacterized protein (164 aa).

The signal sequence occupies residues 1–25; that stretch reads MMKTVKHLLCCAIAASALISTGVHA.

This is an uncharacterized protein from Escherichia coli (strain K12).